Reading from the N-terminus, the 749-residue chain is MAELGAGGDGHRGGDGAVRSETAPDSYKVQDKKNASSRPASAISGQNNNHSGNKPDPPPVLRVDDRQRLARERREEREKQLAAREIVWLEREERARQHYEKHLEERKKRLEEQRQKEERRRAAVEEKRRQRLEEDKERHEAVVRRTMERSQKPKQKHNRWSWGGSLHGSPSIHSADPDRRSVSTMNLSKYVDPVISKRLSSSSATLLNSPDRARRLQLSPWESSVVNRLLTPTHSFLARSKSTAALSGEAASCSPIIMPYKAAHSRNSMDRPKLFVTPPEGSSRRRIIHGTASYKKERERENVLFLTSGTRRAVSPSNPKARQPARSRLWLPSKSLPHLPGTPRPTSSLPPGSVKAAPAQVRPPSPGNIRPVKREVKVEPEKKDPEKEPQKVANEPSLKGRAPLVKVEEATVEERTPAEPEVGPAAPAMAPAPASAPAPASAPAPAPVPTPAMVSAPSSTVNASASVKTSAGTTDPEEATRLLAEKRRLAREQREKEERERREQEELERQKREELAQRVAEERTTRREEESRRLEAEQAREKEEQLQRQAEERALREREEAERAQRQKEEEARVREEAERVRQEREKHFQREEQERLERKKRLEEIMKRTRRTEATDKKTSDQRNGDIAKGALTGGTEVSALPCTTNAPGNGKPVGSPHVVTSHQSKVTVESTPDLEKQPNENGVSVQNENFEEIINLPIGSKPSRLDVTNSESPEIPLNPILAFDDEGTLGPLPQVDGVQTQQTAEVI.

2 disordered regions span residues 1-91 (MAEL…WLER) and 104-180 (EERK…PDRR). Position 2 is an N-acetylalanine (alanine 2). Over residues 36 to 52 (SSRPASAISGQNNNHSG) the composition is skewed to polar residues. Basic and acidic residues-rich tracts occupy residues 62–91 (RVDD…WLER) and 104–151 (EERK…ERSQ). Residues 89 to 152 (LEREERARQH…VRRTMERSQK (64 aa)) are a coiled coil. Phosphoserine occurs at positions 161, 165, 183, 200, 202, 209, and 219. A Phosphothreonine modification is found at threonine 231. A phosphoserine mark is found at serine 235 and serine 254. Lysine 273 participates in a covalent cross-link: Glycyl lysine isopeptide (Lys-Gly) (interchain with G-Cter in SUMO2). Threonine 277 bears the Phosphothreonine mark. Serine 282 carries the phosphoserine modification. Lysine 295 participates in a covalent cross-link: Glycyl lysine isopeptide (Lys-Gly) (interchain with G-Cter in SUMO2). Residues 307 to 320 (TSGTRRAVSPSNPK) show a composition bias toward polar residues. Disordered stretches follow at residues 307–688 (TSGT…VSVQ) and 702–723 (SKPS…NPIL). Phosphoserine is present on residues serine 335 and serine 365. Basic and acidic residues-rich tracts occupy residues 372 to 390 (VKRE…KEPQ) and 406 to 418 (KVEE…RTPA). Residues lysine 373, lysine 377, and lysine 406 each participate in a glycyl lysine isopeptide (Lys-Gly) (interchain with G-Cter in SUMO2) cross-link. A compositionally biased stretch (low complexity) spans 424–433 (PAAPAMAPAP). Residues 434–450 (ASAPAPASAPAPAPVPT) show a composition bias toward pro residues. Over residues 451–460 (PAMVSAPSST) the composition is skewed to low complexity. Residues 461–473 (VNASASVKTSAGT) are compositionally biased toward polar residues. A coiled-coil region spans residues 477 to 612 (EEATRLLAEK…LEEIMKRTRR (136 aa)). A compositionally biased stretch (basic and acidic residues) spans 478-627 (EATRLLAEKR…KKTSDQRNGD (150 aa)). Over residues 660–672 (VVTSHQSKVTVES) the composition is skewed to polar residues. Phosphothreonine is present on threonine 673.

It belongs to the MAP7 family. Interacts with TRPV4. The association with microtubules is regulated by phosphorylation during the cell cycle. During interphase only phosphorylated on serine. Phosphorylated on threonine in mitosis. As to expression, expressed in the skin and cells of epithelial origin. Predominantly expressed in the suprabasal layers of the normal epidermis and relatively abundant in squamous cell carcinomas but barely detectable in basal cell carcinomas.

It localises to the cytoplasm. Its subcellular location is the perinuclear region. The protein localises to the basolateral cell membrane. It is found in the cytoskeleton. In terms of biological role, microtubule-stabilizing protein that may play an important role during reorganization of microtubules during polarization and differentiation of epithelial cells. Associates with microtubules in a dynamic manner. May play a role in the formation of intercellular contacts. Colocalization with TRPV4 results in the redistribution of TRPV4 toward the membrane and may link cytoskeletal microfilaments. The polypeptide is Ensconsin (MAP7) (Homo sapiens (Human)).